The chain runs to 236 residues: Syntaxin-8 (236 aa).

At 1 to 215 the chain is on the cytoplasmic side; it reads MAPDPWFSTY…MVDRKSASCG (215 aa). The stretch at 42 to 65 forms a coiled coil; sequence VTIRALLQNLKEKIALLKDLLLRA. The t-SNARE coiled-coil homology domain occupies 145–207; the sequence is QKIIQEQDAG…RNETRRVNMV (63 aa). S160 is subject to Phosphoserine. The chain crosses the membrane as a helical; Anchor for type IV membrane protein span at residues 216-232; sequence MIMVILLLLVAIVVVAV. At 233 to 236 the chain is on the vesicular side; that stretch reads WPTN.

It belongs to the syntaxin family. Forms a SNARE complex with STX7, VTI1B and VAMP8 which functions in the homotypic fusion of late endosomes. Part of the SNARE core complex containing STX7, VAMP8 and VTI1B. Interacts with VAMP8. Interacts with HECTD3. Interacts with TPC1. In terms of processing, ubiquitinated by HECTD3. Highly expressed in heart. Also found in brain, kidney, liver, lung, placenta, skeletal muscle, spleen and pancreas.

Its subcellular location is the membrane. Vesicle trafficking protein that functions in the early secretory pathway, possibly by mediating retrograde transport from cis-Golgi membranes to the ER. The polypeptide is Syntaxin-8 (STX8) (Homo sapiens (Human)).